We begin with the raw amino-acid sequence, 225 residues long: MSIKQWPEGERPREKLLERGAAALSDAELLAILLRVGTRGMSAVDLARYLLQEFGSLGRLMSAEVGKLSAYKGMGTASFTQFAVVREIGRRILAEELQESIVLSDPDTVADYLRFHLGQEKVEVSVALLLNRQNQLIAVRELSRGTVAENTIYIREIVKLALDEYADSLIIAHNHPGGSPEPSQEDIMFTRRLAQAMSLVDVSLLDHFIVTAQTVRSFRQLGLMP.

Positions 102 to 224 (VLSDPDTVAD…VRSFRQLGLM (123 aa)) constitute an MPN domain. Residues His-173, His-175, and Asp-186 each contribute to the Zn(2+) site. The short motif at 173–186 (HNHPGGSPEPSQED) is the JAMM motif element.

The protein belongs to the UPF0758 family.

This is UPF0758 protein NMCC_1157 from Neisseria meningitidis serogroup C (strain 053442).